The primary structure comprises 761 residues: MASERGKVKHNWSSTSEGCPRKRSCLREPCDVAPSSRPAQRSASRSGGPSSPKRLKAQKEDDVACSRRLSWGSSRRRNNSSSSFSPHFLGPGVGGAASKGCLIRNTRGFLSSGGSPLRPANASLEEMASLEEEACSLKVDSKDSSHNSTNSEFAAEAEGQNDTIEEPNKVQKRKRDRLRDQGSTMIYLKAIQGILGKSMPKRKGEAATRAKPSAAEHPSHGEGPARSEGPAKTAEGAARSVTVTAAQKEKDATPEVSMEEDKTVPERSSFYDRRVVIDPQEKPSEEPLGDRRTVIDKCSPPLEFLDDSDSHLEIQKHKDREVVMEHPSSGSDWSDVEEISTVRFSQEEPVSLKPSAVPEPSSFTTDYVMYPPHLYSSPWCDYASYWTSSPKPSSYPSTGSSSNDAAQVGKSSRSRMSDYSPNSTGSVQNTSRDMEASEEGWSQNSRSFRFSRSSEEREVKEKRTFQEEMPPRPCGGHASSSLPKSHLEPSLEEGFIDTHCHLDMLYSKLSFQGTFTKFRKIYSSSFPKEFQGCISDFCDPRTLTDCLWEELLKEDLVWGAFGCHPHFARYYSESQERNLLQALRHPKAVAFGEMGLDYSYKCTTPVPEQHKVFERQLQLAVSLKKPLVIHCREADEDLLEIMKKFVPPDYKIHRHCFTGSYPVIEPLLKYFPNMSVGFTAVLTYSSAWEAREALRQIPLERIIVETDAPYFLPRQVPKSLCQYAHPGLALHTVREIARVKDQPLSLTLAALRENTSRLYSL.

Disordered stretches follow at residues 1 to 90 (MASE…HFLG), 135 to 181 (CSLK…LRDQ), 197 to 294 (KSMP…RRTV), 318 to 337 (KDRE…SDVE), 343 to 364 (RFSQ…SSFT), and 388 to 486 (SSPK…PKSH). 2 stretches are compositionally biased toward low complexity: residues 33–52 (APSS…PSSP) and 66–85 (SRRL…SSFS). Positions 247–294 (QKEKDATPEVSMEEDKTVPERSSFYDRRVVIDPQEKPSEEPLGDRRTV) are enriched in basic and acidic residues. The segment covering 388 to 402 (SSPKPSSYPSTGSSS) has biased composition (low complexity). Residues 417 to 431 (SDYSPNSTGSVQNTS) show a composition bias toward polar residues. A compositionally biased stretch (basic and acidic residues) spans 452-470 (RSSEEREVKEKRTFQEEMP). A divalent metal cation is bound by residues histidine 499, histidine 501, glutamate 593, histidine 630, histidine 655, and aspartate 707.

The protein belongs to the metallo-dependent hydrolases superfamily. TatD-type hydrolase family. The cofactor is Mg(2+).

The protein localises to the nucleus. Functionally, mg(2+)-dependent 3'RNA exonuclease and endonuclease that resolves R-loops via specific degradation of R-loop RNA stucture. Shows no activity against D-loop and minimal activity against the RNA strand of an RNA-DNA hybrid duplex oligomer. Has no 3' or 5' exonuclease activity, no uracil glycosylase activity, and no 5' flap endonuclease activity on DNA substrates. May have a role in maintaining genomic stability through its role in R-loop resolution. This Homo sapiens (Human) protein is 3'-5' RNA nuclease TATDN2 (TATDN2).